The sequence spans 326 residues: Malate dehydrogenase (326 aa).

11–17 (GAAGQIG) serves as a coordination point for NAD(+). Positions 92 and 98 each coordinate substrate. NAD(+) is bound by residues N105, Q112, and 129-131 (VGN). The substrate site is built by N131 and R162. H187 serves as the catalytic Proton acceptor.

The protein belongs to the LDH/MDH superfamily. MDH type 2 family.

It catalyses the reaction (S)-malate + NAD(+) = oxaloacetate + NADH + H(+). In terms of biological role, catalyzes the reversible oxidation of malate to oxaloacetate. This is Malate dehydrogenase from Leptospira borgpetersenii serovar Hardjo-bovis (strain JB197).